Here is a 74-residue protein sequence, read N- to C-terminus: ATP synthase subunit c (74 aa).

A run of 2 helical transmembrane segments spans residues 8–28 and 52–72; these read FIGV…VSNI and IGAG…MLLI.

Belongs to the ATPase C chain family. As to quaternary structure, F-type ATPases have 2 components, F(1) - the catalytic core - and F(0) - the membrane proton channel. F(1) has five subunits: alpha(3), beta(3), gamma(1), delta(1), epsilon(1). F(0) has three main subunits: a(1), b(2) and c(10-14). The alpha and beta chains form an alternating ring which encloses part of the gamma chain. F(1) is attached to F(0) by a central stalk formed by the gamma and epsilon chains, while a peripheral stalk is formed by the delta and b chains.

The protein resides in the cell inner membrane. In terms of biological role, f(1)F(0) ATP synthase produces ATP from ADP in the presence of a proton or sodium gradient. F-type ATPases consist of two structural domains, F(1) containing the extramembraneous catalytic core and F(0) containing the membrane proton channel, linked together by a central stalk and a peripheral stalk. During catalysis, ATP synthesis in the catalytic domain of F(1) is coupled via a rotary mechanism of the central stalk subunits to proton translocation. Its function is as follows. Key component of the F(0) channel; it plays a direct role in translocation across the membrane. A homomeric c-ring of between 10-14 subunits forms the central stalk rotor element with the F(1) delta and epsilon subunits. The polypeptide is ATP synthase subunit c (Rickettsia bellii (strain RML369-C)).